Reading from the N-terminus, the 1160-residue chain is Large proline-rich protein BAG6 (1160 aa).

Residues 7 to 82 (IEVTVKTLDS…HLVERPPPQS (76 aa)) enclose the Ubiquitin-like domain. Disordered regions lie at residues 76-114 (ERPP…YTTS), 206-261 (EGQS…HPSP), 367-422 (IPMN…GQGT), 478-547 (ASAG…QTNQ), 563-628 (GDQT…DNLA), 672-711 (SGQP…AETL), 962-1038 (SARR…AEPW), and 1126-1160 (YAQQ…SEDA). The span at 85 to 94 (PGGGGGGVSG) shows a compositional bias: gly residues. Composition is skewed to low complexity over residues 95–110 (SSGA…QSSA) and 223–233 (SSSSFSAHPMD). Polar residues-rich tracts occupy residues 247-257 (QTEGETQSGPN) and 371-417 (LGST…QQTG). Composition is skewed to low complexity over residues 478–495 (ASAG…AGAQ) and 566–614 (TSTT…STAS). The span at 677–698 (FPSPNQQPPPSQATPPSAPSGP) shows a compositional bias: pro residues. Residues 699 to 708 (APTTAPSGGA) show a composition bias toward low complexity. The segment covering 1132-1146 (SDIKKRLSDDPDYNH) has biased composition (basic and acidic residues).

As to quaternary structure, component of the bag6/bat3 complex.

The protein resides in the cytoplasm. It localises to the cytosol. It is found in the nucleus. Its subcellular location is the secreted. The protein localises to the extracellular exosome. Functionally, ATP-independent molecular chaperone preventing the aggregation of misfolded and hydrophobic patches-containing proteins. Functions as part of a cytosolic protein quality control complex, the bag6/bat3 complex, which maintains these client proteins in a soluble state and participates in their proper delivery to the endoplasmic reticulum or alternatively can promote their sorting to the proteasome where they undergo degradation. The bag6/bat3 complex is involved in the post-translational delivery of tail-anchored/type II transmembrane proteins to the endoplasmic reticulum membrane. Similarly, the bag6/bat3 complex also functions as a sorting platform for proteins of the secretory pathway that are mislocalized to the cytosol either delivering them to the proteasome for degradation or to the endoplasmic reticulum. The bag6/bat3 complex also plays a role in the endoplasmic reticulum-associated degradation (ERAD), a quality control mechanism that eliminates unwanted proteins of the endoplasmic reticulum through their retrotranslocation to the cytosol and their targeting to the proteasome. It maintains these retrotranslocated proteins in an unfolded yet soluble state condition in the cytosol to ensure their proper delivery to the proteasome. Also required for selective ubiquitin-mediated degradation of defective nascent chain polypeptides by the proteasome. Also involved in endoplasmic reticulum stress-induced pre-emptive quality control, a mechanism that selectively attenuates the translocation of newly synthesized proteins into the endoplasmic reticulum and reroutes them to the cytosol for proteasomal degradation. May ensure the proper degradation of these proteins and thereby protects the endoplasmic reticulum from protein overload upon stress. By stabilizing a large spectrum of proteins, may indirectly affect different biological processes including apoptosis. By controlling the steady-state expression of the IGF1R receptor, indirectly regulates the insulin-like growth factor receptor signaling pathway. Its function is as follows. When nuclear, may also act as a component of some chromatin regulator complex. In Danio rerio (Zebrafish), this protein is Large proline-rich protein BAG6.